The chain runs to 591 residues: Aspartate--tRNA ligase (591 aa).

Residue E176 participates in L-aspartate binding. An aspartate region spans residues Q200 to K203. R222 is an L-aspartate binding site. Residues R222 to E224 and Q231 contribute to the ATP site. Residue H450 participates in L-aspartate binding. E484 provides a ligand contact to ATP. Residue R491 coordinates L-aspartate. G536–R539 serves as a coordination point for ATP.

It belongs to the class-II aminoacyl-tRNA synthetase family. Type 1 subfamily. As to quaternary structure, homodimer.

The protein localises to the cytoplasm. It catalyses the reaction tRNA(Asp) + L-aspartate + ATP = L-aspartyl-tRNA(Asp) + AMP + diphosphate. Functionally, catalyzes the attachment of L-aspartate to tRNA(Asp) in a two-step reaction: L-aspartate is first activated by ATP to form Asp-AMP and then transferred to the acceptor end of tRNA(Asp). The polypeptide is Aspartate--tRNA ligase (Listeria welshimeri serovar 6b (strain ATCC 35897 / DSM 20650 / CCUG 15529 / CIP 8149 / NCTC 11857 / SLCC 5334 / V8)).